We begin with the raw amino-acid sequence, 256 residues long: Indole-3-glycerol phosphate synthase (256 aa).

This sequence belongs to the TrpC family.

It carries out the reaction 1-(2-carboxyphenylamino)-1-deoxy-D-ribulose 5-phosphate + H(+) = (1S,2R)-1-C-(indol-3-yl)glycerol 3-phosphate + CO2 + H2O. It functions in the pathway amino-acid biosynthesis; L-tryptophan biosynthesis; L-tryptophan from chorismate: step 4/5. In Caldanaerobacter subterraneus subsp. tengcongensis (strain DSM 15242 / JCM 11007 / NBRC 100824 / MB4) (Thermoanaerobacter tengcongensis), this protein is Indole-3-glycerol phosphate synthase.